The primary structure comprises 672 residues: Flap endonuclease 1 (672 aa).

Residues 1-106 form an N-domain region; that stretch reads MGIKGLIGFL…QTLAKRKLLR (106 aa). Residue D34 coordinates Mg(2+). Residues R47 and R72 each coordinate DNA. Residues D88, E160, E162, D181, and D183 each coordinate Mg(2+). The I-domain stretch occupies residues 124–252; it reads AIRKYVGRTV…KTAYNLIKKH (129 aa). E160 provides a ligand contact to DNA. G230 and D232 together coordinate DNA. D232 serves as a coordination point for Mg(2+). Positions 327–335 are interaction with PCNA; sequence TQLSLKSFF. Residues 361–436 are disordered; that stretch reads VESAVDSTSD…DAKKRNKRVP (76 aa). Residues 370–382 are compositionally biased toward basic and acidic residues; the sequence is DDGKDEVPSDDKV.

It belongs to the XPG/RAD2 endonuclease family. FEN1 subfamily. In terms of assembly, interacts with PCNA. Three molecules of FEN1 bind to one PCNA trimer with each molecule binding to one PCNA monomer. PCNA stimulates the nuclease activity without altering cleavage specificity. The cofactor is Mg(2+). Post-translationally, phosphorylated. Phosphorylation upon DNA damage induces relocalization to the nuclear plasma.

The protein localises to the nucleus. It is found in the nucleolus. It localises to the nucleoplasm. The protein resides in the mitochondrion. Its function is as follows. Structure-specific nuclease with 5'-flap endonuclease and 5'-3' exonuclease activities involved in DNA replication and repair. During DNA replication, cleaves the 5'-overhanging flap structure that is generated by displacement synthesis when DNA polymerase encounters the 5'-end of a downstream Okazaki fragment. It enters the flap from the 5'-end and then tracks to cleave the flap base, leaving a nick for ligation. Also involved in the long patch base excision repair (LP-BER) pathway, by cleaving within the apurinic/apyrimidinic (AP) site-terminated flap. Acts as a genome stabilization factor that prevents flaps from equilibrating into structures that lead to duplications and deletions. Also possesses 5'-3' exonuclease activity on nicked or gapped double-stranded DNA, and exhibits RNase H activity. Also involved in replication and repair of rDNA and in repairing mitochondrial DNA. This chain is Flap endonuclease 1, found in Babesia bovis.